The primary structure comprises 634 residues: RNA polymerase sigma factor RpoD (634 aa).

A disordered region spans residues 177–202; sequence LHDETPENDEENSSETEGEEHEDNHL. Acidic residues predominate over residues 182-197; that stretch reads PENDEENSSETEGEEH. The interval 385–455 is sigma-70 factor domain-2; that stretch reads MIEANLRLVI…TRAIADQART (71 aa). An Interaction with polymerase core subunit RpoC motif is present at residues 409–412; sequence DLIQ. The tract at residues 464 to 541 is sigma-70 factor domain-3; that stretch reads ETINKILRTS…DKNAVAPIDA (78 aa). The segment at 554–607 is sigma-70 factor domain-4; sequence VLATLTPREERVLRMRFGIGMNTDHTLEEVGQQFKVTRERIRQIESKALRKLQH. The H-T-H motif DNA-binding region spans 580–599; it reads LEEVGQQFKVTRERIRQIES. The segment at 608–634 is disordered; sequence PIRSKKLNSFRSGGKRGDGNSSDLLEA.

This sequence belongs to the sigma-70 factor family. RpoD/SigA subfamily. As to quaternary structure, interacts transiently with the RNA polymerase catalytic core.

The protein localises to the cytoplasm. In terms of biological role, sigma factors are initiation factors that promote the attachment of RNA polymerase to specific initiation sites and are then released. This sigma factor is the primary sigma factor during exponential growth. The polypeptide is RNA polymerase sigma factor RpoD (Rickettsia conorii (strain ATCC VR-613 / Malish 7)).